A 330-amino-acid chain; its full sequence is MRVYITNINGQSIQSTAQLCQNTVTDVAVSLGYRELGIYCYQIHTDSESELSKRLDGIVAGLRHGDVVIFQTPTWNTTEFDEKLMNKLKLYDIKIVLFIHDVVPLMFSGNFYLMDRTIAYYNKADVVVAPSQKMIDKLRDFGMNVSKTVVQGMWDHPTQAPMFPAGLKREIHFPGNPERFSFVKEWKYDIPLKVYTWQNVELPQNVHKINYRPDEQLLMEMSQGGFGLVWMDDKDKEYQSLYCSYKLGSFLAAGIPVIVQEGIANQELIENNGLGWIVKDVEEAIMKVKNVNEDEYIELVKNVRSFNPILRKGFFTRRLLTESVFQAICD.

Residue T16 participates in UDP binding. A substrate protein-binding loop region spans residues 106 to 111 (MFSGNF). UDP-binding positions include R179, 211-214 (YRPD), and 244-249 (SYKLGS).

The protein belongs to the Gtf3 glucosyltransferase family. Homotetramer; a dimer of dimers. It depends on In vitro glycosyltransferase activity is metal-independent. as a cofactor.

The protein operates within protein modification; protein glycosylation. Required for polymorphic O-glycosylation of the serine-rich repeat protein Fap1. Catalyzes the second step in glycosylation of the serine-rich repeat protein in this bacteria. Transfers glucose from UDP-glucose to the terminal GlcNAc moiety of 3-O-(N-acetyl-alpha-D-glucosaminyl)-L-seryl-[protein] which results from the first glycosylation step of Fap1; does not use other sugar nucleotides as substrates. The chain is Glucosyltransferase 3 from Streptococcus parasanguinis.